The following is a 318-amino-acid chain: ADP-ribosyl cyclase/cyclic ADP-ribose hydrolase 2 (318 aa).

Residues 1–32 (MAAQGCAASRLLQLLLQLLLLLLLLAAGGARA) form the signal peptide. 3 cysteine pairs are disulfide-bonded: cysteine 51–cysteine 67, cysteine 83–cysteine 163, and cysteine 144–cysteine 157. N-linked (GlcNAc...) asparagine glycans are attached at residues asparagine 66 and asparagine 95. Tryptophan 109 serves as a coordination point for NAD(+). A nicotinamide-binding site is contributed by tryptophan 109. Asparagine 148 carries N-linked (GlcNAc...) asparagine glycosylation. Position 172 (tryptophan 172) interacts with NAD(+). The N-linked (GlcNAc...) asparagine glycan is linked to asparagine 192. Glutamate 210 contributes to the NAD(+) binding site. Intrachain disulfides connect cysteine 238–cysteine 259 and cysteine 271–cysteine 280. Alanine 293 carries GPI-anchor amidated alanine lipidation. Positions 294 to 318 (PSLYTEQRAGLIIPLFLVLASRTQL) are cleaved as a propeptide — removed in mature form.

This sequence belongs to the ADP-ribosyl cyclase family. In terms of assembly, homodimer. As to expression, expressed in various tissues including placenta, lung, liver and kidney.

It localises to the cell membrane. It carries out the reaction NAD(+) + H2O = ADP-D-ribose + nicotinamide + H(+). It catalyses the reaction NAD(+) = cyclic ADP-beta-D-ribose + nicotinamide + H(+). The enzyme catalyses cyclic ADP-beta-D-ribose + H2O = ADP-D-ribose. Its activity is regulated as follows. ADP-ribosyl cyclase and cADPR hydrolase activities are both activated by Zn(2+) or Mn(2+), and inhibited by Cu(2+), while Mg(2+) and Ca(2+) do not have any significant influence. Its function is as follows. Catalyzes both the synthesis of cyclic ADP-beta-D-ribose (cADPR) from NAD(+), and its hydrolysis to ADP-D-ribose (ADPR). Cyclic ADPR is known to serve as an endogenous second messenger that elicits calcium release from intracellular stores, and thus regulates the mobilization of intracellular calcium. May be involved in pre-B-cell growth. The chain is ADP-ribosyl cyclase/cyclic ADP-ribose hydrolase 2 (BST1) from Homo sapiens (Human).